A 405-amino-acid chain; its full sequence is Tryptophan synthase beta chain (405 aa).

N6-(pyridoxal phosphate)lysine is present on Lys-98.

Belongs to the TrpB family. In terms of assembly, tetramer of two alpha and two beta chains. Requires pyridoxal 5'-phosphate as cofactor.

It carries out the reaction (1S,2R)-1-C-(indol-3-yl)glycerol 3-phosphate + L-serine = D-glyceraldehyde 3-phosphate + L-tryptophan + H2O. The protein operates within amino-acid biosynthesis; L-tryptophan biosynthesis; L-tryptophan from chorismate: step 5/5. The beta subunit is responsible for the synthesis of L-tryptophan from indole and L-serine. The sequence is that of Tryptophan synthase beta chain from Bradyrhizobium diazoefficiens (strain JCM 10833 / BCRC 13528 / IAM 13628 / NBRC 14792 / USDA 110).